The sequence spans 1026 residues: Multidrug resistance protein MdtC (1026 aa).

The next 11 membrane-spanning stretches (helical) occupy residues 15–35 (ILIAAAITLCGILGFRLLPVA), 333–353 (EVEETLAISVALVILVVFLFL), 360–380 (LIPAVAVPVSLIGTFAAMYLC), 387–407 (LSLMALTIATGFVVDDAIVVL), 431–451 (VGFTVISMSLSLVAVFLPLLL), 463–483 (FAVTLSVAIGISLVVSLTLTP), 528–548 (LVGVVFLGTVALNIWLYIAIP), 853–873 (LILIVAAIATVYIVLGILYES), 897–917 (LFNAPFSLIALIGIMLLIGIV), 953–973 (PIMMTTLAALFGALPLVLSDG), and 984–1004 (ITIVGGLVMSQLLTLYTTPVV).

Belongs to the resistance-nodulation-cell division (RND) (TC 2.A.6) family. MdtC subfamily. As to quaternary structure, part of a tripartite efflux system composed of MdtA, MdtB and MdtC. MdtC forms a heteromultimer with MdtB.

It localises to the cell inner membrane. The polypeptide is Multidrug resistance protein MdtC (Salmonella heidelberg (strain SL476)).